We begin with the raw amino-acid sequence, 86 residues long: Small ribosomal subunit protein uS15c (86 aa).

Belongs to the universal ribosomal protein uS15 family. In terms of assembly, part of the 30S ribosomal subunit.

It is found in the plastid. The protein is Small ribosomal subunit protein uS15c (rps15) of Cuscuta obtusiflora (Peruvian dodder).